Consider the following 400-residue polypeptide: Elongation factor Tu-B (400 aa).

The tr-type G domain occupies 10–209; the sequence is KPHVNVGTIG…VVDEYIPTPE (200 aa). The tract at residues 19–26 is G1; that stretch reads GHVDHGKT. 19 to 26 serves as a coordination point for GTP; that stretch reads GHVDHGKT. Residue Thr26 participates in Mg(2+) binding. The segment at 60–64 is G2; sequence GITIN. Residues 81–84 are G3; it reads DCPG. GTP-binding positions include 81-85 and 136-139; these read DCPGH and NKAD. Residues 136 to 139 are G4; that stretch reads NKAD. The segment at 174–176 is G5; that stretch reads SAL.

This sequence belongs to the TRAFAC class translation factor GTPase superfamily. Classic translation factor GTPase family. EF-Tu/EF-1A subfamily. As to quaternary structure, monomer.

The protein resides in the cytoplasm. It carries out the reaction GTP + H2O = GDP + phosphate + H(+). GTP hydrolase that promotes the GTP-dependent binding of aminoacyl-tRNA to the A-site of ribosomes during protein biosynthesis. The polypeptide is Elongation factor Tu-B (Caldanaerobacter subterraneus subsp. tengcongensis (strain DSM 15242 / JCM 11007 / NBRC 100824 / MB4) (Thermoanaerobacter tengcongensis)).